The primary structure comprises 428 residues: Trigger factor (428 aa).

The PPIase FKBP-type domain maps to 163-248 (GDTAVIDFEG…VHEVKAKQLP (86 aa)).

Belongs to the FKBP-type PPIase family. Tig subfamily.

The protein localises to the cytoplasm. It catalyses the reaction [protein]-peptidylproline (omega=180) = [protein]-peptidylproline (omega=0). Functionally, involved in protein export. Acts as a chaperone by maintaining the newly synthesized protein in an open conformation. Functions as a peptidyl-prolyl cis-trans isomerase. The sequence is that of Trigger factor from Geobacillus thermodenitrificans (strain NG80-2).